The following is a 298-amino-acid chain: Ethanolamine ammonia-lyase small subunit (298 aa).

Adenosylcob(III)alamin contacts are provided by Val210, Glu231, and Cys261.

The protein belongs to the EutC family. The basic unit is a heterodimer which dimerizes to form tetramers. The heterotetramers trimerize; 6 large subunits form a core ring with 6 small subunits projecting outwards. Adenosylcob(III)alamin serves as cofactor.

It localises to the bacterial microcompartment. It catalyses the reaction ethanolamine = acetaldehyde + NH4(+). It functions in the pathway amine and polyamine degradation; ethanolamine degradation. Catalyzes the deamination of various vicinal amino-alcohols to oxo compounds. Allows this organism to utilize ethanolamine as the sole source of nitrogen and carbon in the presence of external vitamin B12. The sequence is that of Ethanolamine ammonia-lyase small subunit from Salmonella heidelberg (strain SL476).